We begin with the raw amino-acid sequence, 296 residues long: 4-hydroxybenzoate octaprenyltransferase (296 aa).

Transmembrane regions (helical) follow at residues 28-48, 55-75, 102-122, 145-167, 174-196, 219-239, 241-261, and 275-295; these read PIGI…AGNG, VLIF…INDF, AVML…CTNA, TYYP…FTAA, SAWL…YAMV, VIIL…GNRF, LGGW…WEFW, and FLHN…DYAL.

It belongs to the UbiA prenyltransferase family. Mg(2+) is required as a cofactor.

Its subcellular location is the cell inner membrane. The catalysed reaction is all-trans-octaprenyl diphosphate + 4-hydroxybenzoate = 4-hydroxy-3-(all-trans-octaprenyl)benzoate + diphosphate. Its pathway is cofactor biosynthesis; ubiquinone biosynthesis. Its function is as follows. Catalyzes the prenylation of para-hydroxybenzoate (PHB) with an all-trans polyprenyl group. Mediates the second step in the final reaction sequence of ubiquinone-8 (UQ-8) biosynthesis, which is the condensation of the polyisoprenoid side chain with PHB, generating the first membrane-bound Q intermediate 3-octaprenyl-4-hydroxybenzoate. The chain is 4-hydroxybenzoate octaprenyltransferase from Pseudomonas entomophila (strain L48).